The following is a 312-amino-acid chain: Ribosomal protein L11 methyltransferase (312 aa).

S-adenosyl-L-methionine is bound by residues T162, G183, D205, and N248.

It belongs to the methyltransferase superfamily. PrmA family.

It is found in the cytoplasm. It carries out the reaction L-lysyl-[protein] + 3 S-adenosyl-L-methionine = N(6),N(6),N(6)-trimethyl-L-lysyl-[protein] + 3 S-adenosyl-L-homocysteine + 3 H(+). Functionally, methylates ribosomal protein L11. The sequence is that of Ribosomal protein L11 methyltransferase from Geobacillus thermodenitrificans (strain NG80-2).